The primary structure comprises 650 residues: Acetyl-coenzyme A synthetase (650 aa).

CoA is bound by residues 191 to 194 (RGGR), T311, and N335. ATP-binding positions include 387 to 389 (GEP), 411 to 416 (DTWWQT), D501, and R516. S524 contributes to the CoA binding site. ATP is bound at residue R527. Mg(2+) is bound by residues V538, H540, and I543. R585 is a binding site for CoA. At K610 the chain carries N6-acetyllysine.

Belongs to the ATP-dependent AMP-binding enzyme family. It depends on Mg(2+) as a cofactor. In terms of processing, acetylated. Deacetylation by the SIR2-homolog deacetylase activates the enzyme.

It carries out the reaction acetate + ATP + CoA = acetyl-CoA + AMP + diphosphate. Its function is as follows. Catalyzes the conversion of acetate into acetyl-CoA (AcCoA), an essential intermediate at the junction of anabolic and catabolic pathways. AcsA undergoes a two-step reaction. In the first half reaction, AcsA combines acetate with ATP to form acetyl-adenylate (AcAMP) intermediate. In the second half reaction, it can then transfer the acetyl group from AcAMP to the sulfhydryl group of CoA, forming the product AcCoA. This Vibrio vulnificus (strain CMCP6) protein is Acetyl-coenzyme A synthetase.